Here is a 101-residue protein sequence, read N- to C-terminus: Large ribosomal subunit protein bL28 (101 aa).

Belongs to the bacterial ribosomal protein bL28 family.

This Rhodopseudomonas palustris (strain ATCC BAA-98 / CGA009) protein is Large ribosomal subunit protein bL28.